The primary structure comprises 150 residues: uncharacterized protein (150 aa).

3 consecutive transmembrane segments (helical) span residues 50–70 (VVSV…VIHL), 80–100 (LYIT…QLWL), and 127–147 (KVVI…FFIE).

Its subcellular location is the membrane. This is an uncharacterized protein from Schizosaccharomyces pombe (strain 972 / ATCC 24843) (Fission yeast).